Here is a 142-residue protein sequence, read N- to C-terminus: MSYSNILVAVAVTPESQQLLAKAVSIARPVKGHISLITLASDPEMYNQLAAPMLEDLRSVMQEETQSFLDKLIQDAGYPVDKTFIAYGELSEHILEVCRKYHFDLVICGNHNHSFFSRASCSAKRVIASSEVDVLLVPLTGD.

It belongs to the universal stress protein A family.

Its subcellular location is the cytoplasm. In terms of biological role, required for resistance to DNA-damaging agents. The chain is Universal stress protein C (uspC) from Escherichia coli O157:H7.